The sequence spans 110 residues: Co-chaperonin GroES (110 aa).

The protein belongs to the GroES chaperonin family. As to quaternary structure, heptamer of 7 subunits arranged in a ring. Interacts with the chaperonin GroEL.

The protein resides in the cytoplasm. In terms of biological role, together with the chaperonin GroEL, plays an essential role in assisting protein folding. The GroEL-GroES system forms a nano-cage that allows encapsulation of the non-native substrate proteins and provides a physical environment optimized to promote and accelerate protein folding. GroES binds to the apical surface of the GroEL ring, thereby capping the opening of the GroEL channel. In Mycoplasma genitalium (strain ATCC 33530 / DSM 19775 / NCTC 10195 / G37) (Mycoplasmoides genitalium), this protein is Co-chaperonin GroES.